A 335-amino-acid chain; its full sequence is uncharacterized protein (335 aa).

An ABC transporter domain is found at 21 to 258 (VMTSDLRKVY…QNTYHVQGQN (238 aa)). 60–67 (GPNGAGKT) lines the ATP pocket.

This sequence belongs to the ABC transporter superfamily.

This is an uncharacterized protein from Nostoc sp. (strain PCC 7120 / SAG 25.82 / UTEX 2576).